The sequence spans 155 residues: Protein-export protein SecB (155 aa).

Belongs to the SecB family. Homotetramer, a dimer of dimers. One homotetramer interacts with 1 SecA dimer.

It is found in the cytoplasm. Functionally, one of the proteins required for the normal export of preproteins out of the cell cytoplasm. It is a molecular chaperone that binds to a subset of precursor proteins, maintaining them in a translocation-competent state. It also specifically binds to its receptor SecA. This Enterobacter sp. (strain 638) protein is Protein-export protein SecB.